The chain runs to 808 residues: MSSVRAQFAEVQEQLNQVHSLVDSNTPSDLNKAATILKSLLPVYKDLSGNEESKRPENLEILKEIKSRLTEETQRVMSKKEEAKSLQIQQQQQQQQLLQQQQQQQILESTTRNRQASQQELPKPPILSGYLKKQGDKGLVRSFKKRWFLQRDTKLFYYEKEGDSEPYGFVNLPEMINVKTVDSGFELATPSRVYVFQVFKPSDLTYWTEGLKEFKKYYQSLQNSQKFGANANGNGNSSPNMSSSGSYSDFRKYSESSQQPLNSSTGAINTTPQRGTPIKDRRGTVSGGTTEYSHSSSSTAPDSPTLSSSYVPPPSSSNLNPQDEELKRRENEIIRKHQEKLKQQDDQQQDDKQQQQQQSQEPPQQQQQQQEQLQSQPSQQQQQQQQQQQQQQQQQQQQQQQQQQQQQQQQQQPPQTSPQNSRHGSTNYSQLQQQQQQPQQQPQQQSSPQVIISNNNSPRFESQQQQNNFHNNGSNINLESFRQSIEDELNKKFLKEKQDLMEFEIKKRLEIESEIKKLQLQLDQTKTDAEEKQNKSSNELKKKKAEIEDYEARVTIITKRNEEMDAKIKELESSRPVETFPHEFLWTEEVNSRDLLIASQSKRILELEEQLKLKDNAVTVIKRENEMLRQETEKKDKYINELLEKGGGSGIHTNSNNNNNSNNNNNNSNNNSNTDKIKESMVAHQTQNAFLLQEIQRLETQSQFKLDIKIQQIEELENQLEQQLYQFHRFREAIIGTMSNEYCVKIEKENLDVKKEYFQSLGVSIKLHRVKEGYFANIDINSLFDKVIKENVHYRNWPEWISNQFNQA.

A coiled-coil region spans residues 57–121 (ENLEILKEIK…RNRQASQQEL (65 aa)). The segment covering 108–120 (ESTTRNRQASQQE) has biased composition (polar residues). Disordered regions lie at residues 108 to 127 (ESTT…PPIL), 228 to 325 (GANA…QDEE), 339 to 375 (EKLK…QLQS), 405 to 475 (QQQQ…NGSN), 523 to 542 (DQTK…ELKK), and 645 to 675 (KGGG…SNTD). Residues 124 to 216 (PPILSGYLKK…WTEGLKEFKK (93 aa)) enclose the PH domain. Low complexity predominate over residues 228-248 (GANANGNGNSSPNMSSSGSYS). The segment covering 255–274 (ESSQQPLNSSTGAINTTPQR) has biased composition (polar residues). Residues 293-321 (SHSSSSTAPDSPTLSSSYVPPPSSSNLNP) show a composition bias toward low complexity. Positions 322 to 412 (QDEELKRREN…QQQQQQQQQQ (91 aa)) form a coiled coil. A compositionally biased stretch (basic and acidic residues) spans 339 to 353 (EKLKQQDDQQQDDKQ). Composition is skewed to low complexity over residues 354–375 (QQQQ…QLQS) and 405–414 (QQQQQQQQPP). The span at 417 to 428 (SPQNSRHGSTNY) shows a compositional bias: polar residues. A compositionally biased stretch (low complexity) spans 429–449 (SQLQQQQQQPQQQPQQQSSPQ). Residues 450–475 (VIISNNNSPRFESQQQQNNFHNNGSN) are compositionally biased toward polar residues. Residues 487 to 645 (DELNKKFLKE…DKYINELLEK (159 aa)) are a coiled coil. Residues 525–542 (TKTDAEEKQNKSSNELKK) are compositionally biased toward basic and acidic residues. The segment covering 654-673 (NSNNNNNSNNNNNNSNNNSN) has biased composition (low complexity). Residues 678–734 (KESMVAHQTQNAFLLQEIQRLETQSQFKLDIKIQQIEELENQLEQQLYQFHRFREAI) adopt a coiled-coil conformation.

This is PH domain-containing protein DDB_G0275795 from Dictyostelium discoideum (Social amoeba).